Reading from the N-terminus, the 340-residue chain is Erythroferrone (340 aa).

The signal sequence occupies residues 1–24 (MASTRRPVGARTLLACASLLAAMG). 3 disordered regions span residues 30–63 (SAEPVGTHARPQPPGAELPAPPANSPPEPTIAHA), 79–112 (SDKGINSKRRSKARRLKLGLPGPPGPPGPQGPPG), and 141–161 (HCTRDLTTPASGSPSRVPAAQ). Residues 40-58 (PQPPGAELPAPPANSPPEP) are compositionally biased toward pro residues. The segment covering 84 to 95 (NSKRRSKARRLK) has biased composition (basic residues). Hydroxyproline is present on residues proline 99, proline 101, proline 102, proline 104, proline 105, and proline 107. A compositionally biased stretch (pro residues) spans 99-112 (PGPPGPPGPQGPPG). Residues 145 to 154 (DLTTPASGSP) are compositionally biased toward polar residues. The 156-residue stretch at 185 to 340 (APRVEAAFHC…SHFSAILLGL (156 aa)) folds into the C1q domain. Asparagine 229, asparagine 281, asparagine 292, and asparagine 319 each carry an N-linked (GlcNAc...) asparagine glycan.

The protein belongs to the adipolin/erythroferrone family. Homodimer; disulfide-linked. Forms trimer, hexamers and higher molecular weight oligomers. May form heteromeric complexes with C1QTNF2 and C1QTNF12 and, to a lesser extent, with C1QTNF5 and C1QTNF10. Interacts with BMP5 and BMP7; the interaction inhibits BMP-induced transcription of HAMP. Interacts with BMP6; the interaction inhibits BMP-induced transcription of HAMP. Interacts with BMP2. Interacts with heterodimers composed of BMP2 and BMP6 in vitro, the interaction inhibits the heterodimer binding to its receptor BMPR1A /ALK3 and thereby suppresses expression of HAMP. In terms of processing, N-glycosylated; required for secretion of the mature protein. Expressed in the soleus muscle in the leg (at protein level). Found in blood (at protein level). Weakly expressed in the heart (at protein level). Predominantly expressed in skeletal muscle and, at much lower levels, in other tissues, including lung, eye, smooth muscle, brain and kidney. Within skeletal muscles, higher expression levels in soleus as compared with plantaris. Expressed in osteoblasts, mature osteoclasts and erythroblasts. When fasting, females tend to have higher circulating levels than males. Obese mice tend to have lower expression and circulating levels as compared to lean animals. Following EPO treatment, only expressed in bone marrow and spleen.

It is found in the secreted. Functionally, iron-regulatory hormone that acts as an erythroid regulator after hemorrhage: produced by erythroblasts following blood loss and mediates suppression of hepcidin (HAMP) expression in the liver, thereby promoting increased iron absorption and mobilization from stores. Promotes lipid uptake into adipocytes and hepatocytes via transcriptional up-regulation of genes involved in fatty acid uptake. Inhibits apoptosis and inflammatory response in cardiomyocytes via promotion of sphingosine-1-phosphate (S1P) and cAMP-dependent activation of AKT signaling. Inhibits autophagy induced by nutrient deficiency in hepatocytes via promoting the phosphorylation of IRS1, AKT, and MTOR, and thereby subsequent activation of the AKT-MTOR signaling pathway. Negatively regulates the differentiation of osteoblasts, potentially via sequestering BMP2, and thereby inhibits the activation of SMAD signaling. The reduction in BMP2 signaling in osteoblasts also results in an increase in expression of the osteoclastogenesis-promoting factors TNFSF11/RANKL and SOST, thereby indirectly promotes bone resorption. The sequence is that of Erythroferrone from Mus musculus (Mouse).